Reading from the N-terminus, the 391-residue chain is Elongation factor Tu 2 (391 aa).

In terms of domain architecture, tr-type G spans 10–201 (KPHVNIGTIG…EVDRYIPTPE (192 aa)). The segment at 19 to 26 (GHVDHGKT) is G1. 19–26 (GHVDHGKT) is a binding site for GTP. Thr26 contributes to the Mg(2+) binding site. A G2 region spans residues 55–59 (GITIS). Residues 76–79 (DCPG) are G3. GTP-binding positions include 76–80 (DCPGH) and 131–134 (NKVD). Residues 131-134 (NKVD) form a G4 region. The interval 169 to 171 (SAL) is G5.

It belongs to the TRAFAC class translation factor GTPase superfamily. Classic translation factor GTPase family. EF-Tu/EF-1A subfamily. As to quaternary structure, monomer.

It localises to the cytoplasm. It carries out the reaction GTP + H2O = GDP + phosphate + H(+). Its function is as follows. GTP hydrolase that promotes the GTP-dependent binding of aminoacyl-tRNA to the A-site of ribosomes during protein biosynthesis. The sequence is that of Elongation factor Tu 2 from Bartonella bacilliformis (strain ATCC 35685 / KC583 / Herrer 020/F12,63).